Consider the following 221-residue polypeptide: uncharacterized protein (221 aa).

Residues 40 to 162 are disordered; the sequence is TIEVEPSPVQ…EPPEKVELSP (123 aa). A compositionally biased stretch (polar residues) spans 47–60; sequence PVQQDNPPISSEQA. Residues 82–92 show a composition bias toward low complexity; the sequence is SSAQQEATAQT.

This is an uncharacterized protein from Homo sapiens (Human).